A 502-amino-acid polypeptide reads, in one-letter code: ATP synthase subunit alpha, chloroplastic (502 aa).

Position 170–177 (170–177 (GDRQTGKS)) interacts with ATP.

The protein belongs to the ATPase alpha/beta chains family. F-type ATPases have 2 components, CF(1) - the catalytic core - and CF(0) - the membrane proton channel. CF(1) has five subunits: alpha(3), beta(3), gamma(1), delta(1), epsilon(1). CF(0) has four main subunits: a, b, b' and c.

The protein localises to the plastid. The protein resides in the chloroplast thylakoid membrane. It catalyses the reaction ATP + H2O + 4 H(+)(in) = ADP + phosphate + 5 H(+)(out). In terms of biological role, produces ATP from ADP in the presence of a proton gradient across the membrane. The alpha chain is a regulatory subunit. In Guillardia theta (Cryptophyte), this protein is ATP synthase subunit alpha, chloroplastic.